Reading from the N-terminus, the 419-residue chain is GTPase Obg (419 aa).

One can recognise an Obg domain in the interval methionine 1–methionine 156. The region spanning alanine 157 to isoleucine 334 is the OBG-type G domain. Residues glycine 163–serine 170, phenylalanine 188–valine 192, aspartate 209–glycine 212, asparagine 278–aspartate 281, and asparagine 315–isoleucine 317 contribute to the GTP site. Serine 170 and threonine 190 together coordinate Mg(2+). The OCT domain occupies isoleucine 342 to asparagine 419.

This sequence belongs to the TRAFAC class OBG-HflX-like GTPase superfamily. OBG GTPase family. Monomer. Requires Mg(2+) as cofactor.

The protein localises to the cytoplasm. An essential GTPase which binds GTP, GDP and possibly (p)ppGpp with moderate affinity, with high nucleotide exchange rates and a fairly low GTP hydrolysis rate. Plays a role in control of the cell cycle, stress response, ribosome biogenesis and in those bacteria that undergo differentiation, in morphogenesis control. The sequence is that of GTPase Obg from Mesomycoplasma hyopneumoniae (strain 232) (Mycoplasma hyopneumoniae).